The sequence spans 523 residues: Bifunctional purine biosynthesis protein PurH (523 aa).

Positions 4–152 (DHIRRPIRRA…KNHPSVAVVT (149 aa)) constitute an MGS-like domain.

Belongs to the PurH family.

The enzyme catalyses (6R)-10-formyltetrahydrofolate + 5-amino-1-(5-phospho-beta-D-ribosyl)imidazole-4-carboxamide = 5-formamido-1-(5-phospho-D-ribosyl)imidazole-4-carboxamide + (6S)-5,6,7,8-tetrahydrofolate. It catalyses the reaction IMP + H2O = 5-formamido-1-(5-phospho-D-ribosyl)imidazole-4-carboxamide. It participates in purine metabolism; IMP biosynthesis via de novo pathway; 5-formamido-1-(5-phospho-D-ribosyl)imidazole-4-carboxamide from 5-amino-1-(5-phospho-D-ribosyl)imidazole-4-carboxamide (10-formyl THF route): step 1/1. It functions in the pathway purine metabolism; IMP biosynthesis via de novo pathway; IMP from 5-formamido-1-(5-phospho-D-ribosyl)imidazole-4-carboxamide: step 1/1. This is Bifunctional purine biosynthesis protein PurH from Mycobacterium ulcerans (strain Agy99).